We begin with the raw amino-acid sequence, 62 residues long: Large ribosomal subunit protein bL33 (62 aa).

This sequence belongs to the bacterial ribosomal protein bL33 family.

This chain is Large ribosomal subunit protein bL33, found in Azobacteroides pseudotrichonymphae genomovar. CFP2.